A 227-amino-acid polypeptide reads, in one-letter code: Cytochrome c oxidase subunit 2 (227 aa).

Over 1–14 the chain is Mitochondrial intermembrane; it reads MAYPFQLGLQDATS. Residues 15 to 45 traverse the membrane as a helical segment; that stretch reads PIMEELLHFHDHTLMIVFLISSLVLYIITLM. Residues 46–59 lie on the Mitochondrial matrix side of the membrane; sequence LTTKLTHTSTMDAQ. The chain crosses the membrane as a helical span at residues 60-87; sequence EVETVWTILPAIILILIALPSLRILYMM. At 88 to 227 the chain is on the mitochondrial intermembrane side; it reads DEINNPSLTV…YFETWSAVMV (140 aa). Residues His161, Cys196, Glu198, Cys200, His204, and Met207 each coordinate Cu cation. Glu198 serves as a coordination point for Mg(2+). At Tyr218 the chain carries Phosphotyrosine.

It belongs to the cytochrome c oxidase subunit 2 family. Component of the cytochrome c oxidase (complex IV, CIV), a multisubunit enzyme composed of 14 subunits. The complex is composed of a catalytic core of 3 subunits MT-CO1, MT-CO2 and MT-CO3, encoded in the mitochondrial DNA, and 11 supernumerary subunits COX4I, COX5A, COX5B, COX6A, COX6B, COX6C, COX7A, COX7B, COX7C, COX8 and NDUFA4, which are encoded in the nuclear genome. The complex exists as a monomer or a dimer and forms supercomplexes (SCs) in the inner mitochondrial membrane with NADH-ubiquinone oxidoreductase (complex I, CI) and ubiquinol-cytochrome c oxidoreductase (cytochrome b-c1 complex, complex III, CIII), resulting in different assemblies (supercomplex SCI(1)III(2)IV(1) and megacomplex MCI(2)III(2)IV(2)). Found in a complex with TMEM177, COA6, COX18, COX20, SCO1 and SCO2. Interacts with TMEM177 in a COX20-dependent manner. Interacts with COX20. Interacts with COX16. The cofactor is Cu cation.

Its subcellular location is the mitochondrion inner membrane. It catalyses the reaction 4 Fe(II)-[cytochrome c] + O2 + 8 H(+)(in) = 4 Fe(III)-[cytochrome c] + 2 H2O + 4 H(+)(out). In terms of biological role, component of the cytochrome c oxidase, the last enzyme in the mitochondrial electron transport chain which drives oxidative phosphorylation. The respiratory chain contains 3 multisubunit complexes succinate dehydrogenase (complex II, CII), ubiquinol-cytochrome c oxidoreductase (cytochrome b-c1 complex, complex III, CIII) and cytochrome c oxidase (complex IV, CIV), that cooperate to transfer electrons derived from NADH and succinate to molecular oxygen, creating an electrochemical gradient over the inner membrane that drives transmembrane transport and the ATP synthase. Cytochrome c oxidase is the component of the respiratory chain that catalyzes the reduction of oxygen to water. Electrons originating from reduced cytochrome c in the intermembrane space (IMS) are transferred via the dinuclear copper A center (CU(A)) of subunit 2 and heme A of subunit 1 to the active site in subunit 1, a binuclear center (BNC) formed by heme A3 and copper B (CU(B)). The BNC reduces molecular oxygen to 2 water molecules using 4 electrons from cytochrome c in the IMS and 4 protons from the mitochondrial matrix. This Vulpes vulpes (Red fox) protein is Cytochrome c oxidase subunit 2 (MT-CO2).